Here is a 263-residue protein sequence, read N- to C-terminus: Ribosomal RNA small subunit methyltransferase A (263 aa).

Positions 13, 15, 40, 61, 85, and 105 each coordinate S-adenosyl-L-methionine.

This sequence belongs to the class I-like SAM-binding methyltransferase superfamily. rRNA adenine N(6)-methyltransferase family. RsmA subfamily.

The protein resides in the cytoplasm. The enzyme catalyses adenosine(1518)/adenosine(1519) in 16S rRNA + 4 S-adenosyl-L-methionine = N(6)-dimethyladenosine(1518)/N(6)-dimethyladenosine(1519) in 16S rRNA + 4 S-adenosyl-L-homocysteine + 4 H(+). In terms of biological role, specifically dimethylates two adjacent adenosines (A1518 and A1519) in the loop of a conserved hairpin near the 3'-end of 16S rRNA in the 30S particle. May play a critical role in biogenesis of 30S subunits. This is Ribosomal RNA small subunit methyltransferase A from Mycoplasma pneumoniae (strain ATCC 29342 / M129 / Subtype 1) (Mycoplasmoides pneumoniae).